Here is a 270-residue protein sequence, read N- to C-terminus: MISRRRFLQATAATIATSSGFGYMHYCEPGWFELIRHRLAFFKDNAAPFKILFLADLHYSRFVPLSLISDAIALGIEQKPDLILLGGDYVLFDMSLNFSAFSDVLSPLAECAPTFACFGNHDRPVGTEKNHLIGETLKSAGITVLFNQATVIATPNRQFELVGTGDLWAGQCKPPPASEANLPRLVLAHNPDSKEVMRDEPWDLMLCGHTHGGQLRVPLVGEPFAPVEDKRYVAGLNAFGERHIYTTRGVGSLYGLRLNCRPEVTMLELV.

Positions 56, 58, 88, 120, 209, and 211 each coordinate a divalent metal cation.

The protein belongs to the metallophosphoesterase superfamily. Requires a divalent metal cation as cofactor.

Shows phosphodiesterase activity, hydrolyzing phosphodiester bond in the artificial chromogenic substrate bis-p-nitrophenyl phosphate (bis-pNPP). The polypeptide is Phosphodiesterase YaeI (yaeI) (Escherichia coli (strain K12)).